The primary structure comprises 140 residues: Large ribosomal subunit protein uL11 (140 aa).

Belongs to the universal ribosomal protein uL11 family. Part of the ribosomal stalk of the 50S ribosomal subunit. Interacts with L10 and the large rRNA to form the base of the stalk. L10 forms an elongated spine to which L12 dimers bind in a sequential fashion forming a multimeric L10(L12)X complex. In terms of processing, one or more lysine residues are methylated.

In terms of biological role, forms part of the ribosomal stalk which helps the ribosome interact with GTP-bound translation factors. The chain is Large ribosomal subunit protein uL11 from Nitratidesulfovibrio vulgaris (strain ATCC 29579 / DSM 644 / CCUG 34227 / NCIMB 8303 / VKM B-1760 / Hildenborough) (Desulfovibrio vulgaris).